Here is a 666-residue protein sequence, read N- to C-terminus: ATP-dependent zinc metalloprotease FtsH (666 aa).

The segment at Met1–Pro23 is disordered. Over Met1 to Arg27 the chain is Cytoplasmic. A helical membrane pass occupies residues Trp28–Pro48. Residues Ser49 to Gln125 lie on the Extracellular side of the membrane. Residues Val126 to Ser146 traverse the membrane as a helical segment. The Cytoplasmic portion of the chain corresponds to Gly147–Leu666. ATP is bound at residue Gly219 to Thr226. His442 is a binding site for Zn(2+). Residue Glu443 is part of the active site. His446 and Asp518 together coordinate Zn(2+). Positions Pro626–Leu666 are disordered. Positions Gly641–Gly653 are enriched in low complexity.

It in the central section; belongs to the AAA ATPase family. This sequence in the C-terminal section; belongs to the peptidase M41 family. As to quaternary structure, homohexamer. Requires Zn(2+) as cofactor.

It is found in the cell membrane. Functionally, acts as a processive, ATP-dependent zinc metallopeptidase for both cytoplasmic and membrane proteins. Plays a role in the quality control of integral membrane proteins. This Acidothermus cellulolyticus (strain ATCC 43068 / DSM 8971 / 11B) protein is ATP-dependent zinc metalloprotease FtsH.